We begin with the raw amino-acid sequence, 317 residues long: uncharacterized protein (317 aa).

This is an uncharacterized protein from Borreliella burgdorferi (strain ATCC 35210 / DSM 4680 / CIP 102532 / B31) (Borrelia burgdorferi).